A 549-amino-acid chain; its full sequence is Carboxylesterase 1C (549 aa).

The first 18 residues, 1 to 18 (MWLCALVWASLAVCPIWG), serve as a signal peptide directing secretion. N-linked (GlcNAc...) asparagine glycosylation occurs at N79. A disulfide bridge connects residues C87 and C116. S221 acts as the Acyl-ester intermediate in catalysis. A disulfide bond links C273 and C284. Residues N274, N275, and N302 are each glycosylated (N-linked (GlcNAc...) asparagine). Residue E340 is the Charge relay system of the active site. N-linked (GlcNAc...) asparagine glycosylation occurs at N375. H453 (charge relay system) is an active-site residue. S471 bears the Phosphoserine mark. N476 carries N-linked (GlcNAc...) asparagine glycosylation. The Prevents secretion from ER motif lies at 546-549 (TEHT).

The protein belongs to the type-B carboxylesterase/lipase family.

The protein localises to the endoplasmic reticulum lumen. It catalyses the reaction a carboxylic ester + H2O = an alcohol + a carboxylate + H(+). Its function is as follows. Involved in the detoxification of xenobiotics and in the activation of ester and amide prodrugs. Involved in the extracellular metabolism of lung surfactant. The chain is Carboxylesterase 1C (Ces1c) from Rattus norvegicus (Rat).